A 177-amino-acid chain; its full sequence is MPVIEKKRTRDLPQINERIRFPKIRVIDTDGSQLGILTPQEALQLAEEKELDLVLLSDKADPPVCRIMDYGKYKFEQEKKAREARKKQHTADVKEVKMRYKIEEHDYNVRVKQAERFLKDGDKVKATVMFRGREIQHSDLAEDLLKRMATDLEPFGEVQQAPKKEGRNMMMLISPKK.

It belongs to the IF-3 family. In terms of assembly, monomer.

Its subcellular location is the cytoplasm. Functionally, IF-3 binds to the 30S ribosomal subunit and shifts the equilibrium between 70S ribosomes and their 50S and 30S subunits in favor of the free subunits, thus enhancing the availability of 30S subunits on which protein synthesis initiation begins. The chain is Translation initiation factor IF-3 from Nostoc sp. (strain PCC 7120 / SAG 25.82 / UTEX 2576).